Reading from the N-terminus, the 340-residue chain is UDP-3-O-(3-hydroxymyristoyl)glucosamine N-acyltransferase (340 aa).

Histidine 239 acts as the Proton acceptor in catalysis.

This sequence belongs to the transferase hexapeptide repeat family. LpxD subfamily. As to quaternary structure, homotrimer.

It carries out the reaction a UDP-3-O-[(3R)-3-hydroxyacyl]-alpha-D-glucosamine + a (3R)-hydroxyacyl-[ACP] = a UDP-2-N,3-O-bis[(3R)-3-hydroxyacyl]-alpha-D-glucosamine + holo-[ACP] + H(+). The catalysed reaction is UDP-3-O-[(3R)-3-hydroxytetradecanoyl]-alpha-D-glucosamine + (3R)-hydroxytetradecanoyl-[ACP] = UDP-2-N,3-O-bis[(3R)-3-hydroxytetradecanoyl]-alpha-D-glucosamine + holo-[ACP] + H(+). The protein operates within glycolipid biosynthesis; lipid IV(A) biosynthesis; lipid IV(A) from (3R)-3-hydroxytetradecanoyl-[acyl-carrier-protein] and UDP-N-acetyl-alpha-D-glucosamine: step 3/6. Functionally, catalyzes the N-acylation of UDP-3-O-(hydroxytetradecanoyl)glucosamine using 3-hydroxytetradecanoyl-ACP as the acyl donor. Is involved in the biosynthesis of lipid A, a phosphorylated glycolipid that anchors the lipopolysaccharide to the outer membrane of the cell. The chain is UDP-3-O-(3-hydroxymyristoyl)glucosamine N-acyltransferase from Yersinia enterocolitica.